Here is a 597-residue protein sequence, read N- to C-terminus: MKIEDKLVTSVISGLKALYGQDVPAAQVQLQKTKKEFEGHLTLVVFPFLKMSKKGPEQTAQEIGEYLKANEPAVAAFNVIKGFLNLTVASATWIELLNEIHTDAQYGIVSADENAPLVMIEYSSPNTNKPLHLGHVRNNLLGNALANIVMANGNKVVKTNIVNDRGIHICKSMLAWQKYGKGETPESSGKKGDHLVGDYYVAFDKHYKAEVAELMEKGMSKEEAEAASPLMNEAREMLVKWEAGDPEVRALWQMMNNWVYAGFDETYRKMGVGFDKIYYESNTYLEGKEKVMEGLEKGFFFKKEDGSVWADLTAEGLDHKLLLRGDGTSVYMTQDIGTAKLRFADYPIDKMIYVVGNEQNYHFQVLSILLDKLGFEWGKSLVHFSYGMVELPEGKMKSREGTVVDADDLMAEMIATAKETSQELGKLDGLTQEEADDIARIVGLGALKYFILKVDARKNMTFNPKESIDFNGNTGPFIQYTYARIRSVLRKAAEAGIVIPEVLPANIELSEKEEGLIQMVADFAAVVRQAGEDYSPSGIANYVYDLVKEYNQFYHDFSILREENEDVKLFRIALSANIAKVVRLGMGLLGIEVPDRM.

The 'HIGH' region signature appears at 125-135 (PNTNKPLHLGH).

This sequence belongs to the class-I aminoacyl-tRNA synthetase family. In terms of assembly, monomer.

The protein resides in the cytoplasm. It carries out the reaction tRNA(Arg) + L-arginine + ATP = L-arginyl-tRNA(Arg) + AMP + diphosphate. This is Arginine--tRNA ligase from Bacteroides fragilis (strain ATCC 25285 / DSM 2151 / CCUG 4856 / JCM 11019 / LMG 10263 / NCTC 9343 / Onslow / VPI 2553 / EN-2).